The chain runs to 267 residues: Short-chain dehydrogenase/reductase GME11361 (267 aa).

NADP(+)-binding residues include Ile-10, Thr-36, Lys-42, Asp-57, Asn-80, Tyr-129, Lys-133, Val-162, and Ser-164. The active-site Proton acceptor is Tyr-129. Lys-133 acts as the Lowers pKa of active site Tyr in catalysis.

This sequence belongs to the short-chain dehydrogenases/reductases (SDR) family.

Its pathway is secondary metabolite biosynthesis. In terms of biological role, short-chain dehydrogenase/reductase; part of the gene cluster that mediates the biosynthesis of dibenzodioxocinones such as pestalotiollide B, a novel class of inhibitors against cholesterol ester transfer protein (CEPT). The biosynthesis initiates from condensation of acetate and malonate units catalyzed by the non-reducing PKS pks8/GME11356. Pks8/GME11356 lacks a thioesterase (TE) domain, which is important to the cyclizing of the third ring of atrochrysone carboxylic acid, and the esterase GME11355 might play the role of TE and catalyzes the cyclization reaction of the C ring. The lactamase-like protein GME11357 (or other beta-lactamases in Pestalotiopsis microspora) probably hydrolyzes the thioester bond between the ACP of pks8/GME11356 and the intermediate to release atrochrysone carboxylic acid, which is spontaneously dehydrates to form endocrocin anthrone. Endocrocin anthrone is further converted to emodin via the endocrocin intermediate. Emodin is then oxidized by several enzymes such as the Baeyer-Villiger oxidase GME11358, the oxidoreductase GME11367, the short chain dehydrogenase/reductase GME11373, as well as by other oxidoreductases from the cluster, to modify the A and C rings and open the B ring, and finally yield monodictyphenone. The prenyltransferase GME11375 may catalyze the addition reaction between the C5 side chains and the carbon bone of dibenzodioxocinones. The remaining biochemical reactions to the final product dibenzodioxocinones should be methylation catalyzed by methyltransferase GME11366 and reduction and lactonization reaction catalyzed by a series of oxidordeuctases. The chain is Short-chain dehydrogenase/reductase GME11361 from Pestalotiopsis microspora.